A 261-amino-acid chain; its full sequence is uncharacterized protein (261 aa).

A signal peptide spans 1–20 (MKIQVMLIIIFVGIFTICLA). 2 N-linked (GlcNAc...) asparagine; by host glycosylation sites follow: Asn22 and Asn27.

It localises to the secreted. This is an uncharacterized protein from Acanthamoeba polyphaga (Amoeba).